A 376-amino-acid chain; its full sequence is MNHSERFVFIAEWYDPNASLLRRYELLFYPGDGSVEMHDVKNHRTFLKRTKYDNLHLEDLFIGNKVNVFSRQLVLIDYGDQYTARQLGSRKEKTLALIKPDAISKAGEIIEIINKAGFTITKLKMMMLSRKEALDFHVDHQSRPFFNELIQFITTGPIIAMEILRDDAICEWKRLLGPANSGVARTDASESIRALFGTDGIRNAAHGPDSFASAAREMELFFPSSGGCGPANTAKFTNCTCCIVKPHAVSEGLLGKILMAIRDAGFEISAMQMFNMDRVNVEEFYEVYKGVVTEYHDMVTEMYSGPCVAMEIQQNNATKTFREFCGPADPEIARHLRPGTLRAIFGKTKIQNAVHCTDLPEDGLLEVQYFFKILDN.

In terms of domain architecture, DM10 spans His-3–Lys-91.

It belongs to the NDK family. In terms of assembly, component of sperm flagellar doublet microtubules. Component of the gamma-tubulin ring complex. Post-translationally, undergoes autophosphorylation. In terms of tissue distribution, expressed in airway epithelial cells.

The protein localises to the cytoplasm. The protein resides in the cytoskeleton. It is found in the microtubule organizing center. It localises to the centrosome. Its subcellular location is the nucleus. The protein localises to the spindle. The protein resides in the cilium axoneme. It is found in the flagellum axoneme. It localises to the cell projection. Its subcellular location is the cilium. In terms of biological role, possesses an intrinsic kinase activity. Displays 3'-5' exonuclease activity with a preference for single-stranded DNA. Does not seem to have nucleoside diphosphate kinase activity. Functional component of the gamma-tubulin ring complex, implicated in the regulation of the microtubule-nucleating activity of the gamma-tubulin ring complex in centrosomes, in a kinase activity-dependent manner. Part of the dynein-decorated doublet microtubules (DMTs) in cilia axoneme, which is required for motile cilia beating. The polypeptide is Nucleoside diphosphate kinase homolog 7 (Homo sapiens (Human)).